Reading from the N-terminus, the 643-residue chain is Protein cueball (643 aa).

The first 21 residues, 1–21 (MMIWVPALIFLSACLLPRSNG), serve as a signal peptide directing secretion. Over 22–530 (TPLEWDFAVT…VCQTPFVWTS (509 aa)) the chain is Extracellular. Asn-77 and Asn-103 each carry an N-linked (GlcNAc...) asparagine glycan. LDL-receptor class B repeat units follow at residues 116 to 163 (RNLF…DICR), 164 to 208 (RKLY…DQLS), and 209 to 254 (DRLF…TNDA). Asn-172 is a glycosylation site (N-linked (GlcNAc...) asparagine). Positions 276–290 (ATTTVRPEVESSTDG) are enriched in polar residues. The disordered stretch occupies residues 276-303 (ATTTVRPEVESSTDGTESESKQESEPVE). The N-linked (GlcNAc...) asparagine glycan is linked to Asn-312. EGF-like domains are found at residues 363 to 397 (RMDQ…SRCE), 398 to 429 (IREC…FTGE), and 432 to 470 (EVSN…ERCE). Cystine bridges form between Cys-372-Cys-385, Cys-387-Cys-396, Cys-401-Cys-410, Cys-405-Cys-420, Cys-436-Cys-446, Cys-440-Cys-458, and Cys-460-Cys-469. N-linked (GlcNAc...) asparagine glycans are attached at residues Asn-472 and Asn-507. Residues 531-551 (SVIIILVVGIVFSLLLITTII) traverse the membrane as a helical segment. Residues 552–643 (HGIRRLYKPK…LIHNMEDDLY (92 aa)) lie on the Cytoplasmic side of the membrane.

It belongs to the cueball family.

The protein localises to the cell membrane. In terms of biological role, has a role in spermatogenesis and oogenesis. This is Protein cueball from Drosophila ananassae (Fruit fly).